Consider the following 663-residue polypeptide: RING finger protein 145 (663 aa).

14 helical membrane passes run 53-73 (YLALNMHYVGYILSVVLLTLP), 77-97 (LVQLYLYFVTALLLYAGHQIS), 123-143 (FTTALIGQLVVCTLCSCVMKT), 146-166 (IWLFSAHMLPLLARLCLVPLE), 168-188 (IVIINKFAMIFTGLEVLYFLG), 205-222 (LVQVVEVYGLLALGMSLW), 225-245 (LVVPVLFMVFWLVLFALQIYS), 275-295 (YSLLGLVFTVSFVALGVLTLC), 316-336 (TEGVTLLILAVQTGLIELQVV), 340-360 (FLLSIILFIVVASILQSMLEI), 384-404 (SLCLFLLVFPAYMAYMICQFF), 410-430 (LLIIISSSILTSLQVLGTLFI), 460-480 (LLEFVVALCVVAYGVSETIFG), and 482-502 (WTVMGSMIIFIHSYYNVWLRA). The short motif at 81–84 (YLYF) is the YLYF motif element. Cys-537 is an active-site residue. Residues 537–575 (CAICYQDMKSAVITPCSHFFHAGCLKKWLYVQDTCPLCH) form an RING-type; atypical zinc finger. The segment at 587-663 (LGTEAAPQPP…EGEVCPVESA (77 aa)) is disordered. Positions 619–628 (GTGTQEGSGD) are enriched in polar residues.

In terms of assembly, interacts (via YLYF motif) with INSIG1 and INSIG2.

It localises to the endoplasmic reticulum membrane. The enzyme catalyses S-ubiquitinyl-[E2 ubiquitin-conjugating enzyme]-L-cysteine + [acceptor protein]-L-lysine = [E2 ubiquitin-conjugating enzyme]-L-cysteine + N(6)-ubiquitinyl-[acceptor protein]-L-lysine.. Functionally, E3 ubiquitin ligase that catalyzes the direct transfer of ubiquitin from E2 ubiquitin-conjugating enzyme to a specific substrate. In response to bacterial infection, negatively regulates the phagocyte oxidative burst by controlling the turnover of the NADPH oxidase complex subunits. Promotes monoubiquitination of CYBA and 'Lys-48'-linked polyubiquitination and degradation of CYBB NADPH oxidase catalytic subunits, both essential for the generation of antimicrobial reactive oxygen species. Involved in the maintenance of cholesterol homeostasis. In response to high sterol concentrations ubiquitinates HMGCR, a rate-limiting enzyme in cholesterol biosynthesis, and targets it for degradation. The interaction with INSIG1 is required for this function. In addition, triggers ubiquitination of SCAP, likely inhibiting its transport to the Golgi apparatus and the subsequent processing/maturation of SREBPF2, ultimately down-regulating cholesterol biosynthesis. This is RING finger protein 145 from Mus musculus (Mouse).